The primary structure comprises 64 residues: Large ribosomal subunit protein bL33c (64 aa).

This sequence belongs to the bacterial ribosomal protein bL33 family.

It is found in the plastid. The protein localises to the chloroplast. This is Large ribosomal subunit protein bL33c (rpl33) from Mesostigma viride (Green alga).